The following is a 186-amino-acid chain: Thiol:disulfide interchange protein CycY (186 aa).

Residues 1-20 (MGRYTLALLPLIVFGGIAHG) form the signal peptide. One can recognise a Thioredoxin domain in the interval 47 to 182 (DAEPAAARRA…LVPAMEKALG (136 aa)). C80 and C83 are disulfide-bonded.

Belongs to the thioredoxin family. DsbE subfamily.

The protein localises to the periplasm. Functionally, required for disulfide bond formation in some periplasmic proteins. Also acts as a disulfide oxidoreductase in cytochromes c biogenesis. The cysteines of apocytochromes c must be in the reduced state for covalent linkage between the two moieties to occur. The sequence is that of Thiol:disulfide interchange protein CycY (cycY) from Rhizobium leguminosarum bv. viciae.